The primary structure comprises 356 residues: Ribosomal RNA large subunit methyltransferase M (356 aa).

S-adenosyl-L-methionine contacts are provided by residues Ser-187, 220–223, Asp-239, Asp-259, and Asp-276; that span reads CPGG. Lys-305 acts as the Proton acceptor in catalysis.

This sequence belongs to the class I-like SAM-binding methyltransferase superfamily. RNA methyltransferase RlmE family. RlmM subfamily. As to quaternary structure, monomer.

It localises to the cytoplasm. It carries out the reaction cytidine(2498) in 23S rRNA + S-adenosyl-L-methionine = 2'-O-methylcytidine(2498) in 23S rRNA + S-adenosyl-L-homocysteine + H(+). Its function is as follows. Catalyzes the 2'-O-methylation at nucleotide C2498 in 23S rRNA. The sequence is that of Ribosomal RNA large subunit methyltransferase M from Pseudoalteromonas atlantica (strain T6c / ATCC BAA-1087).